Here is a 358-residue protein sequence, read N- to C-terminus: Magnesium-protoporphyrin IX monomethyl ester [oxidative] cyclase 1 (358 aa).

Belongs to the AcsF family. The cofactor is Fe cation.

It carries out the reaction Mg-protoporphyrin IX 13-monomethyl ester + 3 NADPH + 3 O2 + 2 H(+) = 3,8-divinyl protochlorophyllide a + 3 NADP(+) + 5 H2O. It participates in porphyrin-containing compound metabolism; chlorophyll biosynthesis (light-independent). In terms of biological role, catalyzes the formation of the isocyclic ring in chlorophyll biosynthesis. Mediates the cyclase reaction, which results in the formation of divinylprotochlorophyllide (Pchlide) characteristic of all chlorophylls from magnesium-protoporphyrin IX 13-monomethyl ester (MgPMME). This is Magnesium-protoporphyrin IX monomethyl ester [oxidative] cyclase 1 from Synechocystis sp. (strain ATCC 27184 / PCC 6803 / Kazusa).